The following is a 149-amino-acid chain: Large ribosomal subunit protein bL9 (149 aa).

The protein belongs to the bacterial ribosomal protein bL9 family.

Its function is as follows. Binds to the 23S rRNA. The sequence is that of Large ribosomal subunit protein bL9 from Leptospira borgpetersenii serovar Hardjo-bovis (strain JB197).